A 308-amino-acid polypeptide reads, in one-letter code: Hydroxyacylglutathione hydrolase, mitochondrial (308 aa).

Residues M1–L13 constitute a mitochondrion transit peptide. 4 residues coordinate Zn(2+): H102, H104, D106, and H107. K116 carries the N6-acetyllysine modification. Zn(2+) is bound by residues H158 and D182. Substrate contacts are provided by residues K191–Y193 and H221–Y223. H221 is a binding site for Zn(2+). Residue K229 is modified to N6-acetyllysine; alternate. Position 229 is an N6-succinyllysine; alternate (K229). Residue R297–K300 participates in substrate binding.

Belongs to the metallo-beta-lactamase superfamily. Glyoxalase II family. As to quaternary structure, monomer. It depends on Zn(2+) as a cofactor. As to expression, testis.

The protein resides in the mitochondrion matrix. The protein localises to the cytoplasm. The catalysed reaction is an S-(2-hydroxyacyl)glutathione + H2O = a 2-hydroxy carboxylate + glutathione + H(+). It catalyses the reaction (R)-S-lactoylglutathione + H2O = (R)-lactate + glutathione + H(+). Its pathway is secondary metabolite metabolism; methylglyoxal degradation; (R)-lactate from methylglyoxal: step 2/2. Thiolesterase that catalyzes the hydrolysis of S-D-lactoyl-glutathione to form glutathione and D-lactic acid. This chain is Hydroxyacylglutathione hydrolase, mitochondrial (HAGH), found in Macaca fascicularis (Crab-eating macaque).